The following is a 283-amino-acid chain: Homeobox protein Hox-A9a (283 aa).

2 disordered regions span residues 25–54 and 162–181; these read VPRY…GTCS and EKDA…EKPG. A DNA-binding region (homeobox) is located at residues 216–275; sequence TRKKRCPYTKHQILELEKEFLFNTYLTRDRRYEVARLLNLTERQVKIWFQNRRMKMKKFN.

The protein belongs to the Abd-B homeobox family.

The protein localises to the nucleus. Sequence-specific transcription factor which is part of a developmental regulatory system that provides cells with specific positional identities on the anterior-posterior axis. The polypeptide is Homeobox protein Hox-A9a (hoxa9a) (Takifugu rubripes (Japanese pufferfish)).